The following is a 458-amino-acid chain: Probable beta-eliminating lyase (458 aa).

K257 is modified (N6-(pyridoxal phosphate)lysine).

This sequence belongs to the beta-eliminating lyase family. Pyridoxal 5'-phosphate serves as cofactor.

This chain is Probable beta-eliminating lyase, found in Trichomonas vaginalis (strain ATCC PRA-98 / G3).